Consider the following 430-residue polypeptide: MQFKNALTATAILSASALAGTNSTTSIPSSCSIGTSATATAQADLDKISGCSTIVGNLTITGDLGSAALASIQEIDGSLTIFNSSSLSSFSADSIKKITGDLNMQELIILTSASFGSLQEVDSINMVTLPAISTFSTDLQNANNIIVSDTTLESVEGFSTLKKVNVFNINNNRYLNSFQSSLESVSDSLQFSSNGDNTTLAFDNLVWANNITLRDVNSISFGSLQTVNASLGFINNTLPSLNLTQLSKVGQSLSIVSNDELSKAAFSNLTTVGGGFIIANNTQLKVIDGFNKVQTVGGAIEVTGNFSTLDLSSLKSVRGGANFDSSSSNFSCNALKKLQSNGAIQGDSFVCKNGATSTSVKLSSTSTESSKSSATSSASSSGDASNAQASVSASASSSSSSSKKSKGAAPELVPATSFMGVVAAVAVALL.

The N-terminal stretch at 1–19 is a signal peptide; that stretch reads MQFKNALTATAILSASALA. Asparagine 22, asparagine 57, asparagine 83, asparagine 197, asparagine 210, asparagine 228, asparagine 235, asparagine 242, asparagine 268, asparagine 280, asparagine 305, and asparagine 329 each carry an N-linked (GlcNAc...) asparagine glycan. At serine 340 the chain carries Phosphoserine. Positions 362–402 are enriched in low complexity; it reads LSSTSTESSKSSATSSASSSGDASNAQASVSASASSSSSSS. A disordered region spans residues 362–411; sequence LSSTSTESSKSSATSSASSSGDASNAQASVSASASSSSSSSKKSKGAAPE. Glycine 407 is lipidated: GPI-anchor amidated glycine. The propeptide at 408–430 is removed in mature form; it reads AAPELVPATSFMGVVAAVAVALL.

Belongs to the SPS2 family. Post-translationally, the GPI-anchor is attached to the protein in the endoplasmic reticulum and serves to target the protein to the cell surface. There, the glucosamine-inositol phospholipid moiety is cleaved off and the GPI-modified mannoprotein is covalently attached via its lipidless GPI glycan remnant to the 1,6-beta-glucan of the outer cell wall layer.

The protein localises to the cell membrane. Its subcellular location is the secreted. It is found in the cell wall. Functionally, required for proper cell wall integrity and for the correct assembly of the mannoprotein outer layer of the cell wall. Important for apical bud growth. In Saccharomyces cerevisiae (strain JAY291) (Baker's yeast), this protein is Cell wall protein ECM33 (ECM33).